The primary structure comprises 717 residues: uncharacterized protein (717 aa).

It belongs to the asfivirus C717R family.

It is found in the virion. This is an uncharacterized protein from Ornithodoros (relapsing fever ticks).